Reading from the N-terminus, the 266-residue chain is Undecaprenyl-diphosphatase (266 aa).

Helical transmembrane passes span 1 to 21 (MDTF…FLPI), 39 to 59 (QGLS…VIYF), 87 to 107 (WWII…KDFI), 111 to 131 (LRSA…LWWA), 149 to 169 (ALLI…RSGA), 183 to 203 (AAAR…AILV), 218 to 238 (ALTL…HYFL), and 246 to 266 (MTPF…FIFL).

It belongs to the UppP family.

Its subcellular location is the cell inner membrane. The enzyme catalyses di-trans,octa-cis-undecaprenyl diphosphate + H2O = di-trans,octa-cis-undecaprenyl phosphate + phosphate + H(+). Catalyzes the dephosphorylation of undecaprenyl diphosphate (UPP). Confers resistance to bacitracin. This is Undecaprenyl-diphosphatase from Shewanella sp. (strain MR-7).